Consider the following 512-residue polypeptide: 2,3-bisphosphoglycerate-independent phosphoglycerate mutase (512 aa).

2 residues coordinate Mn(2+): Asp-11 and Ser-61. Ser-61 (phosphoserine intermediate) is an active-site residue. Substrate contacts are provided by residues His-122, 152 to 153, Arg-184, Arg-190, 259 to 262, and Lys-332; these read RD and RADR. 5 residues coordinate Mn(2+): Asp-399, His-403, Asp-440, His-441, and His-459.

It belongs to the BPG-independent phosphoglycerate mutase family. Monomer. Requires Mn(2+) as cofactor.

It carries out the reaction (2R)-2-phosphoglycerate = (2R)-3-phosphoglycerate. It participates in carbohydrate degradation; glycolysis; pyruvate from D-glyceraldehyde 3-phosphate: step 3/5. Catalyzes the interconversion of 2-phosphoglycerate and 3-phosphoglycerate. In Francisella tularensis subsp. novicida (strain U112), this protein is 2,3-bisphosphoglycerate-independent phosphoglycerate mutase.